The primary structure comprises 328 residues: Interleukin-12 subunit beta (328 aa).

A signal peptide spans 1–22 (MCHQQLVISWFSLVFLASPLVA). In terms of domain architecture, Ig-like C2-type spans 23–106 (IWELKKDVYV…LSHSLLLLHK (84 aa)). Disulfide bonds link cysteine 50/cysteine 90, cysteine 131/cysteine 142, and cysteine 170/cysteine 193. A glycan (N-linked (GlcNAc...) asparagine) is linked at asparagine 135. Asparagine 222 is a glycosylation site (N-linked (GlcNAc...) asparagine). In terms of domain architecture, Fibronectin type-III spans 237–328 (PPKNLQLKPL…WSEWASVPCS (92 aa)). Cysteine 300 and cysteine 327 are joined by a disulfide. Residue tryptophan 319 is glycosylated (C-linked (Man) tryptophan).

This sequence belongs to the IL-12B family. Heterodimer with IL12A; disulfide-linked. The heterodimer is known as interleukin IL-12. Heterodimer with IL23A; disulfide-linked. The heterodimer is known as interleukin IL-23. Also secreted as a monomer. Interacts with NBR1; this interaction promotes IL-12 secretion. Known to be C-mannosylated in the recombinant protein; it is not yet known for sure if the wild-type protein is also modified.

The protein localises to the secreted. In terms of biological role, cytokine that can act as a growth factor for activated T and NK cells, enhance the lytic activity of NK/lymphokine-activated killer cells, and stimulate the production of IFN-gamma by resting PBMC. Functionally, associates with IL23A to form the IL-23 interleukin, a heterodimeric cytokine which functions in innate and adaptive immunity. IL-23 may constitute with IL-17 an acute response to infection in peripheral tissues. IL-23 binds to a heterodimeric receptor complex composed of IL12RB1 and IL23R, activates the Jak-Stat signaling cascade, stimulates memory rather than naive T-cells and promotes production of pro-inflammatory cytokines. IL-23 induces autoimmune inflammation and thus may be responsible for autoimmune inflammatory diseases and may be important for tumorigenesis. This is Interleukin-12 subunit beta (IL12B) from Homo sapiens (Human).